The chain runs to 302 residues: GTPase Era (302 aa).

In terms of domain architecture, Era-type G spans 9-177 (YCGFIAIVGR…EKIVRQSLRE (169 aa)). The segment at 17–24 (GRPNVGKS) is G1. 17–24 (GRPNVGKS) lines the GTP pocket. The interval 43-47 (QTTRH) is G2. Residues 64-67 (DTPG) are G3. GTP-binding positions include 64-68 (DTPGL) and 126-129 (NKVD). The segment at 126–129 (NKVD) is G4. Residues 156 to 158 (ISA) are G5. Residues 208 to 285 (TGEELPYSVT…HLELWVKVKS (78 aa)) form the KH type-2 domain.

Belongs to the TRAFAC class TrmE-Era-EngA-EngB-Septin-like GTPase superfamily. Era GTPase family. In terms of assembly, monomer.

It is found in the cytoplasm. Its subcellular location is the cell inner membrane. In terms of biological role, an essential GTPase that binds both GDP and GTP, with rapid nucleotide exchange. Plays a role in 16S rRNA processing and 30S ribosomal subunit biogenesis and possibly also in cell cycle regulation and energy metabolism. This chain is GTPase Era, found in Haemophilus influenzae (strain PittGG).